A 133-amino-acid polypeptide reads, in one-letter code: Small ribosomal subunit protein uS8 (133 aa).

This sequence belongs to the universal ribosomal protein uS8 family. Part of the 30S ribosomal subunit. Contacts proteins S5 and S12.

One of the primary rRNA binding proteins, it binds directly to 16S rRNA central domain where it helps coordinate assembly of the platform of the 30S subunit. The sequence is that of Small ribosomal subunit protein uS8 from Cyanothece sp. (strain PCC 7425 / ATCC 29141).